The chain runs to 625 residues: Chromatin structure-remodeling complex subunit RSC4 (625 aa).

The segment at 1–35 (MVVKKRKLATEAGGSDERPKYLPGKHPKNQEKTPH) is disordered. 2 Bromo domains span residues 53-158 (WHIP…VLKA) and 181-292 (KLVD…IQKE). Serine 199 and serine 545 each carry phosphoserine. Residues 536–552 (RTSNVNSNLSQPQQQEN) show a composition bias toward polar residues. Residues 536–555 (RTSNVNSNLSQPQQQENDVI) form a disordered region.

Component of the two forms of the RSC complex composed of at least either RSC1 or RSC2, and ARP7, ARP9, LDB7, NPL6, RSC3, RSC30, RSC4, RSC58, RSC6, RSC8, RSC9, SFH1, STH1, HTL1 and probably RTT102. The complexes interact with histone and histone variant components of centromeric chromatin.

The protein resides in the nucleus. In terms of biological role, component of the chromatin structure remodeling complex (RSC), which is involved in transcription regulation and nucleosome positioning. RSC is responsible for the transfer of a histone octamer from a nucleosome core particle to naked DNA. The reaction requires ATP and involves an activated RSC-nucleosome intermediate. Remodeling reaction also involves DNA translocation, DNA twist and conformational change. As a reconfigurer of centromeric and flanking nucleosomes, RSC complex is required both for proper kinetochore function in chromosome segregation and, via a PKC1-dependent signaling pathway, for organization of the cellular cytoskeleton. The protein is Chromatin structure-remodeling complex subunit RSC4 (RSC4) of Saccharomyces cerevisiae (strain ATCC 204508 / S288c) (Baker's yeast).